The following is a 287-amino-acid chain: Eukaryotic translation initiation factor 3 subunit F (287 aa).

The region spanning 12–142 (VRVHPVVLFQ…IKAYVCVSLG (131 aa)) is the MPN domain.

Belongs to the eIF-3 subunit F family. In terms of assembly, component of the eukaryotic translation initiation factor 3 (eIF-3) complex.

The protein localises to the cytoplasm. Functionally, component of the eukaryotic translation initiation factor 3 (eIF-3) complex, which is involved in protein synthesis of a specialized repertoire of mRNAs and, together with other initiation factors, stimulates binding of mRNA and methionyl-tRNAi to the 40S ribosome. The eIF-3 complex specifically targets and initiates translation of a subset of mRNAs involved in cell proliferation. This Anopheles gambiae (African malaria mosquito) protein is Eukaryotic translation initiation factor 3 subunit F.